A 301-amino-acid polypeptide reads, in one-letter code: Ribosomal RNA small subunit methyltransferase H (301 aa).

S-adenosyl-L-methionine contacts are provided by residues 35–37 (GGH), Asp-55, Phe-84, Asp-105, and Gln-112.

This sequence belongs to the methyltransferase superfamily. RsmH family.

It localises to the cytoplasm. It catalyses the reaction cytidine(1402) in 16S rRNA + S-adenosyl-L-methionine = N(4)-methylcytidine(1402) in 16S rRNA + S-adenosyl-L-homocysteine + H(+). Its function is as follows. Specifically methylates the N4 position of cytidine in position 1402 (C1402) of 16S rRNA. In Chloroflexus aggregans (strain MD-66 / DSM 9485), this protein is Ribosomal RNA small subunit methyltransferase H.